The sequence spans 328 residues: dTDP-3,4-didehydro-2,6-dideoxy-alpha-D-glucose 3-reductase (328 aa).

Residue R20 participates in substrate binding. Residues 38-39 (SR), L75, and H80 each bind NADP(+). The active-site Proton donor is K98. Positions 166 and 178 each coordinate NADP(+). Positions 236 and 256 each coordinate substrate.

Belongs to the Gfo/Idh/MocA family.

It carries out the reaction dTDP-4-dehydro-2,6-dideoxy-alpha-D-glucose + NADP(+) = dTDP-3,4-didehydro-2,6-dideoxy-alpha-D-glucose + NADPH + H(+). It functions in the pathway antibiotic biosynthesis. Involved in the biosynthesis of one of the two 2,6-deoxysugars, dTDP-L-oleandrose, attached to the macrolactone ring oleandolide to produce the aglycone antibiotic oleandomycin. Catalyzes the reduction of the C-3 keto moiety of dTDP-3,4-diketo-2,6-dideoxy-alpha-D-glucose to yield dTDP-4-keto-2,6-dideoxy-alpha-D-glucose. NADPH is the better reductant, however NADH can also be used. The sequence is that of dTDP-3,4-didehydro-2,6-dideoxy-alpha-D-glucose 3-reductase from Streptomyces antibioticus.